The primary structure comprises 167 residues: Endoribonuclease YbeY (167 aa).

Positions 64 to 101 (GKPTNVLSWPSEERASEEPGMAPEPPEPGDPEDPEPLG) are disordered. Residues 90-99 (EPGDPEDPEP) are compositionally biased toward acidic residues. Positions 131, 135, and 141 each coordinate Zn(2+).

The protein belongs to the endoribonuclease YbeY family. Zn(2+) serves as cofactor.

The protein localises to the cytoplasm. Single strand-specific metallo-endoribonuclease involved in late-stage 70S ribosome quality control and in maturation of the 3' terminus of the 16S rRNA. This Cereibacter sphaeroides (strain ATCC 17023 / DSM 158 / JCM 6121 / CCUG 31486 / LMG 2827 / NBRC 12203 / NCIMB 8253 / ATH 2.4.1.) (Rhodobacter sphaeroides) protein is Endoribonuclease YbeY.